Reading from the N-terminus, the 305-residue chain is tRNA uridine(34) hydroxylase (305 aa).

In terms of domain architecture, Rhodanese spans 125 to 219; sequence ADENTVVVDT…YLEEVPREQS (95 aa). The active-site Cysteine persulfide intermediate is cysteine 179.

It belongs to the TrhO family.

It carries out the reaction uridine(34) in tRNA + AH2 + O2 = 5-hydroxyuridine(34) in tRNA + A + H2O. Catalyzes oxygen-dependent 5-hydroxyuridine (ho5U) modification at position 34 in tRNAs. The protein is tRNA uridine(34) hydroxylase of Brucella ovis (strain ATCC 25840 / 63/290 / NCTC 10512).